The following is an 880-amino-acid chain: Alanine--tRNA ligase (880 aa).

4 residues coordinate Zn(2+): H563, H567, C673, and H677.

The protein belongs to the class-II aminoacyl-tRNA synthetase family. Zn(2+) is required as a cofactor.

Its subcellular location is the cytoplasm. It catalyses the reaction tRNA(Ala) + L-alanine + ATP = L-alanyl-tRNA(Ala) + AMP + diphosphate. In terms of biological role, catalyzes the attachment of alanine to tRNA(Ala) in a two-step reaction: alanine is first activated by ATP to form Ala-AMP and then transferred to the acceptor end of tRNA(Ala). Also edits incorrectly charged Ser-tRNA(Ala) and Gly-tRNA(Ala) via its editing domain. The polypeptide is Alanine--tRNA ligase (Caulobacter vibrioides (strain ATCC 19089 / CIP 103742 / CB 15) (Caulobacter crescentus)).